The primary structure comprises 570 residues: MSEKYPGPLVVEGKLSDAERMKLESNYLRGTIAEDLNDGLTGGFKGDNFLLIRFHGMYQQDDRDIRAERAAQKLEPRHAMLLRCRLPGGVITTTQWQAIDKFAADNTIYGSIRLTNRQTFQFHGILKKNVKPVHQMLHSVGLDALATANDMNRNVLCTSNPYESELHAEAYEWAKKISEHLLPRTRAYAEIWLDQEKVATTDEEPILGQTYLPRKFKTTVVIPPQNDIDLHANDMNFVAIAENGKLVGFNLLVGGGLSIEHGNKKTYARTASEFGYLPLEHTLAVAEAVVTTQRDWGNRTDRKNAKTKYTLERVGLETFKAEVERRAGITFEPIRPYEFTGRGDRIGWVKGIDDKWHLTLFIENGRILDYPGRPLKTGLLEIAKIHQGEFRITANQNLIIASVPESQKAKIEKLARDHGLMNAVSAQRENSMACVSFPTCPLAMAEAERFLPSFTDKVEAILEKHGIPDEHIVMRVTGCPNGCGRAMLAEIGLVGKAPGRYNLHLGGNRIGSRIPRMYQENITEPDIQASLDELIGRWAKEREAGEGFGDFTVRAGIIRPVLDPARDFWE.

Residues cysteine 434, cysteine 440, cysteine 479, and cysteine 483 each coordinate [4Fe-4S] cluster. Cysteine 483 serves as a coordination point for siroheme.

The protein belongs to the nitrite and sulfite reductase 4Fe-4S domain family. Alpha(8)-beta(8). The alpha component is a flavoprotein, the beta component is a hemoprotein. Siroheme is required as a cofactor. The cofactor is [4Fe-4S] cluster.

It carries out the reaction hydrogen sulfide + 3 NADP(+) + 3 H2O = sulfite + 3 NADPH + 4 H(+). Its pathway is sulfur metabolism; hydrogen sulfide biosynthesis; hydrogen sulfide from sulfite (NADPH route): step 1/1. Its function is as follows. Component of the sulfite reductase complex that catalyzes the 6-electron reduction of sulfite to sulfide. This is one of several activities required for the biosynthesis of L-cysteine from sulfate. The sequence is that of Sulfite reductase [NADPH] hemoprotein beta-component from Salmonella typhi.